We begin with the raw amino-acid sequence, 500 residues long: L-arabinose isomerase (500 aa).

4 residues coordinate Mn(2+): Glu306, Glu333, His350, and His450.

Belongs to the arabinose isomerase family. As to quaternary structure, homohexamer. It depends on Mn(2+) as a cofactor.

It carries out the reaction beta-L-arabinopyranose = L-ribulose. Its pathway is carbohydrate degradation; L-arabinose degradation via L-ribulose; D-xylulose 5-phosphate from L-arabinose (bacterial route): step 1/3. Its function is as follows. Catalyzes the conversion of L-arabinose to L-ribulose. The protein is L-arabinose isomerase of Salmonella newport (strain SL254).